A 309-amino-acid polypeptide reads, in one-letter code: Porphobilinogen deaminase (309 aa).

S-(dipyrrolylmethanemethyl)cysteine is present on C241.

Belongs to the HMBS family. As to quaternary structure, monomer. Dipyrromethane serves as cofactor.

The enzyme catalyses 4 porphobilinogen + H2O = hydroxymethylbilane + 4 NH4(+). The protein operates within porphyrin-containing compound metabolism; protoporphyrin-IX biosynthesis; coproporphyrinogen-III from 5-aminolevulinate: step 2/4. Its function is as follows. Tetrapolymerization of the monopyrrole PBG into the hydroxymethylbilane pre-uroporphyrinogen in several discrete steps. The polypeptide is Porphobilinogen deaminase (Bacillus thuringiensis (strain Al Hakam)).